Consider the following 259-residue polypeptide: uncharacterized protein (259 aa).

This is an uncharacterized protein from Bacillus anthracis.